An 834-amino-acid chain; its full sequence is Probable glucan 1,3-beta-glucosidase D (834 aa).

Basic and acidic residues predominate over residues 1 to 33 (MPSHSRSRDRYGGRDSDREARYDYDYARRRYAT). 2 disordered regions span residues 1 to 188 (MPSH…ASHL) and 200 to 251 (QYEK…TKAR). At 1 to 306 (MPSHSRSRDR…GGRPFWKRKK (306 aa)) the chain is on the cytoplasmic side. Over residues 34–45 (DDNDDDYDDDEL) the composition is skewed to acidic residues. Basic and acidic residues-rich tracts occupy residues 46–76 (EHGL…RDAE), 98–173 (YGHD…ETAA), 201–218 (YEKE…AAKA), and 228–245 (VVGE…ESHR). A helical; Signal-anchor for type II membrane protein transmembrane segment spans residues 307-327 (WIGLGALILILVIVIPVAVVV). Residues 328-834 (SKKHDNKSDP…PDFGNLPEYY (507 aa)) lie on the Extracellular side of the membrane. A disordered region spans residues 331 to 354 (HDNKSDPADPQGTSPGKSNLDGLS). N-linked (GlcNAc...) asparagine glycosylation is found at asparagine 333, asparagine 379, asparagine 384, asparagine 396, asparagine 549, asparagine 561, and asparagine 570. The active-site Proton donor is the glutamate 600. Asparagine 639, asparagine 672, and asparagine 692 each carry an N-linked (GlcNAc...) asparagine glycan. Glutamate 705 (nucleophile) is an active-site residue.

This sequence belongs to the glycosyl hydrolase 5 (cellulase A) family.

The protein resides in the cell membrane. It carries out the reaction Successive hydrolysis of beta-D-glucose units from the non-reducing ends of (1-&gt;3)-beta-D-glucans, releasing alpha-glucose.. Functionally, glucosidase involved in the degradation of cellulosic biomass. Active on lichenan. This chain is Probable glucan 1,3-beta-glucosidase D (exgD), found in Neosartorya fischeri (strain ATCC 1020 / DSM 3700 / CBS 544.65 / FGSC A1164 / JCM 1740 / NRRL 181 / WB 181) (Aspergillus fischerianus).